The sequence spans 435 residues: Methylenetetrahydrofolate--tRNA-(uracil-5-)-methyltransferase TrmFO (435 aa).

10–15 contributes to the FAD binding site; that stretch reads GAGLAG.

Belongs to the MnmG family. TrmFO subfamily. FAD is required as a cofactor.

The protein localises to the cytoplasm. It catalyses the reaction uridine(54) in tRNA + (6R)-5,10-methylene-5,6,7,8-tetrahydrofolate + NADH + H(+) = 5-methyluridine(54) in tRNA + (6S)-5,6,7,8-tetrahydrofolate + NAD(+). The catalysed reaction is uridine(54) in tRNA + (6R)-5,10-methylene-5,6,7,8-tetrahydrofolate + NADPH + H(+) = 5-methyluridine(54) in tRNA + (6S)-5,6,7,8-tetrahydrofolate + NADP(+). In terms of biological role, catalyzes the folate-dependent formation of 5-methyl-uridine at position 54 (M-5-U54) in all tRNAs. This Halalkalibacterium halodurans (strain ATCC BAA-125 / DSM 18197 / FERM 7344 / JCM 9153 / C-125) (Bacillus halodurans) protein is Methylenetetrahydrofolate--tRNA-(uracil-5-)-methyltransferase TrmFO.